Consider the following 256-residue polypeptide: Glutamate racemase (256 aa).

Substrate contacts are provided by residues 11–12 (DS) and 43–44 (YG). Cys-74 acts as the Proton donor/acceptor in catalysis. A substrate-binding site is contributed by 75–76 (NT). The active-site Proton donor/acceptor is the Cys-182. Position 183–184 (183–184 (TH)) interacts with substrate.

This sequence belongs to the aspartate/glutamate racemases family.

The enzyme catalyses L-glutamate = D-glutamate. It participates in cell wall biogenesis; peptidoglycan biosynthesis. Its function is as follows. Provides the (R)-glutamate required for cell wall biosynthesis. This chain is Glutamate racemase, found in Leptospira interrogans serogroup Icterohaemorrhagiae serovar Lai (strain 56601).